A 256-amino-acid chain; its full sequence is DNA polymerase sliding clamp 2 (256 aa).

The protein belongs to the PCNA family. Homotrimer. The subunits circularize to form a toroid; DNA passes through its center. Replication factor C (RFC) is required to load the toroid on the DNA.

Sliding clamp subunit that acts as a moving platform for DNA processing. Responsible for tethering the catalytic subunit of DNA polymerase and other proteins to DNA during high-speed replication. In Pyrobaculum aerophilum (strain ATCC 51768 / DSM 7523 / JCM 9630 / CIP 104966 / NBRC 100827 / IM2), this protein is DNA polymerase sliding clamp 2.